Here is a 250-residue protein sequence, read N- to C-terminus: Probable ABC transporter permease protein BAB2_1148 (250 aa).

The next 6 helical transmembrane spans lie at 12–32 (LLSFAVGIGGWYLLTATGAVV), 63–83 (VLSGFVLGVALAIPVGFLMGW), 94–114 (WVQFFRMIPPLAVIPLAIVTL), 122–142 (IFVIFLASFLSSVVATYQGVI), 172–192 (VPFILVGVRIGLGSAWATVVA), and 211–231 (LYYDLPTIFVSLVTIGILGLF). Positions 56-236 (IFASLRRVLS…ILGLFMDRLL (181 aa)) constitute an ABC transmembrane type-1 domain.

It belongs to the binding-protein-dependent transport system permease family. The complex is composed of two ATP-binding proteins (BAB2_1147), two transmembrane proteins (BAB2_1148) and a solute-binding protein (BAB2_1146).

Its subcellular location is the cell inner membrane. In terms of biological role, probably part of an ABC transporter complex. Probably responsible for the translocation of the substrate across the membrane. This chain is Probable ABC transporter permease protein BAB2_1148, found in Brucella abortus (strain 2308).